The primary structure comprises 508 residues: Maturase K (508 aa).

Belongs to the intron maturase 2 family. MatK subfamily.

The protein localises to the plastid. It localises to the chloroplast. Usually encoded in the trnK tRNA gene intron. Probably assists in splicing its own and other chloroplast group II introns. The polypeptide is Maturase K (Manilkara zapota (Sapodilla plum)).